The chain runs to 994 residues: MRRRPPSRGGRGAARARETRRQPRHRSGRRMAEAISCTLNCSCQSFKPGKINHRQCDQCKHGWVAHALSKLRIPPMYPTSQVEIVQSNVVFDISSLMLYGTQAIPVRLKILLDRLFSVLKQDEVLQILHALDWTLQDYIRGYVLQDASGKVLDHWSIMTSEEEVATLQQFLRFGETKSIVELMAIQEKEEQSIIIPPSTANVDIRAFIESCSHRSSSLPTPVDKGNPSSIHPFENLISNMTFMLPFQFFNPLPPALIGSLPEQYMLEQGHDQSQDPKQEVHGPFPDSSFLTSSSTPFQVEKDQCLNCPDAITKKEDSTHLSDSSSYNIVTKFERTQLSPEAKVKPERNSLGTKKGRVFCTACEKTFYDKGTLKIHYNAVHLKIKHKCTIEGCNMVFSSLRSRNRHSANPNPRLHMPMNRNNRDKDLRNSLNLASSENYKCPGFTVTSPDCRPPPSYPGSGEDSKGQPAFPNIGQNGVLFPNLKTVQPVLPFYRSPATPAEVANTPGILPSLPLLSSSIPEQLISNEMPFDALPKKKSRKSSMPIKIEKEAVEIANEKRHNLSSDEDMPLQVVSEDEQEACSPQSHRVSEEQHVQSGGLGKPFPEGERPCHRESVIESSGAISQTPEQATHNSERETEQTPALIMVPREVEDGGHEHYFTPGMEPQVPFSDYMELQQRLLAGGLFSALSNRGMAFPCLEDSKELEHVGQHALARQIEENRFQCDICKKTFKNACSVKIHHKNMHVKEMHTCTVEGCNATFPSRRSRDRHSSNLNLHQKALSQEALESSEDHFRAAYLLKDVAKEAYQDVAFTQQASQTSVIFKGTSRMGSLVYPITQVHSASLESYNSGPLSEGTILDLSTTSSMKSESSSHSSWDSDGVSEEGTVLMEDSDGNCEGSSLVPGEDEYPICVLMEKADQSLASLPSGLPITCHLCQKTYSNKGTFRAHYKTVHLRQLHKCKVPGCNTMFSSVRSRNRHSQNPNLHKSLASSPSHLQ.

Positions M1–R29 are disordered. The hydrophobic stretch occupies residues M240–F249. 2 consecutive C2H2-type zinc fingers follow at residues V357–H380 and H385–H414. Disordered stretches follow at residues R402 to D425 and T444 to I472. The Nuclear localization signal signature appears at P533–K539. S537 and S541 each carry phosphoserine. Residues N555 to T639 are disordered. Positions S563 to E578 are enriched in acidic residues. Residues P603–V614 are compositionally biased toward basic and acidic residues. Residues I615 to H630 show a composition bias toward polar residues. 2 consecutive C2H2-type zinc fingers follow at residues F720–H743 and H748–H775. The span at S859 to D877 shows a compositional bias: low complexity. The interval S859 to E881 is disordered. 2 consecutive C2H2-type zinc fingers follow at residues I928–H951 and H956–H983. Residues V970–Q994 form a disordered region.

As to quaternary structure, interacts with HSF2BP (via C-terminus). In terms of processing, phosphorylation on Ser-537 and Ser-541 leads to cytoplasmic localization. As to expression, in epidermis, primarily detected in cells of the basal or immediately suprabasal layers (at protein level). In hair follicles, mainly expressed in the outer root sheath (at protein level). Expressed in epidermis, testis and foreskin, and to a lower extent in thymus, spleen, mammary glands, placenta, brain and heart. Expressed in the ovary, notably in oocytes.

It localises to the nucleus. The protein localises to the cytoplasm. It is found in the nucleoplasm. Transcriptional activator. It is likely involved in the regulation of keratinocytes terminal differentiation in squamous epithelia and hair follicles. Required for the maintenance of spermatogenesis. It is involved in the positive regulation of oocyte maturation, probably acting through the control of BMP15 levels and regulation of AKT signaling cascade. May also play a role in the early development of embryos. This Homo sapiens (Human) protein is Zinc finger protein basonuclin-1 (BNC1).